A 560-amino-acid chain; its full sequence is MELPNHAKQLLLQLNQQRAKGYLCDVIIVVENALFRAHKNILAASSIYFKSLILHDNLINLDTDMVNPSVFRQVLDFIYTGKLLSSDQFSDHNFNALLTAASYLQLHDLAALCRKKLKRNGRSLLNKPTTPTNGRTSRNQRLSSTPVTPNQMSGLKDSEKTKRHEELIKDDLSEDEMFARNTHCTTSNSLSPSTSKNGSNGSCGMQELGLDLSKKSPSGSTATEEVSPSSIPQESPQSASESTANSASFDENPNTQNLTAGEPMELGVGECEESQPPPDVDQHKSSRQVTRQRRQPKSEGKKGEDMERVTLPNGVSKRLKVAGERLPAGGNGNSEVSFQCKDEEEGLENGQEQSEESGQSENEGGRNSANYVYRQEGFEPALGDNLYVCIPCGKGFPSSEELNAHVETHTEEELYIKEEDDDSYPKEDEVEAEDLSSQITQVHGTETRRFSCSVCNKSYKDPATLRQHEKTHWLTRPFPCNICGKMFTQRGTMTRHMRSHLGLKPFACEECGMRFTRQYRLTEHMRVHSGEKPYECQLCGGKFTQQRNLISHLRMHTSPS.

Residues 24 to 87 (CDVIIVVENA…IYTGKLLSSD (64 aa)) form the BTB domain. Disordered stretches follow at residues 122–163 (RSLL…KTKR) and 183–367 (HCTT…GGRN). 2 stretches are compositionally biased toward polar residues: residues 126-153 (NKPTTPTNGRTSRNQRLSSTPVTPNQMS) and 183-203 (HCTTSNSLSPSTSKNGSNGSC). The span at 224 to 242 (EEVSPSSIPQESPQSASES) shows a compositional bias: low complexity. Over residues 243 to 259 (TANSASFDENPNTQNLT) the composition is skewed to polar residues. The segment covering 296–308 (PKSEGKKGEDMER) has biased composition (basic and acidic residues). A compositionally biased stretch (low complexity) spans 348-362 (ENGQEQSEESGQSEN). 5 consecutive C2H2-type zinc fingers follow at residues 387–409 (YVCIPCGKGFPSSEELNAHVETH), 450–472 (FSCSVCNKSYKDPATLRQHEKTH), 478–500 (FPCNICGKMFTQRGTMTRHMRSH), 506–528 (FACEECGMRFTRQYRLTEHMRVH), and 534–556 (YECQLCGGKFTQQRNLISHLRMH).

It belongs to the krueppel C2H2-type zinc-finger protein family. Hic subfamily.

The protein resides in the nucleus. Transcriptional repressor. The protein is Hypermethylated in cancer 2 protein (hic2) of Danio rerio (Zebrafish).